A 632-amino-acid chain; its full sequence is 1-deoxy-D-xylulose-5-phosphate synthase (632 aa).

Thiamine diphosphate contacts are provided by residues H72 and 113–115 (GHA). D144 is a Mg(2+) binding site. Thiamine diphosphate contacts are provided by residues 145-146 (GA), N174, Y285, and E368. Position 174 (N174) interacts with Mg(2+).

It belongs to the transketolase family. DXPS subfamily. In terms of assembly, homodimer. Mg(2+) is required as a cofactor. It depends on thiamine diphosphate as a cofactor.

It carries out the reaction D-glyceraldehyde 3-phosphate + pyruvate + H(+) = 1-deoxy-D-xylulose 5-phosphate + CO2. Its pathway is metabolic intermediate biosynthesis; 1-deoxy-D-xylulose 5-phosphate biosynthesis; 1-deoxy-D-xylulose 5-phosphate from D-glyceraldehyde 3-phosphate and pyruvate: step 1/1. Its function is as follows. Catalyzes the acyloin condensation reaction between C atoms 2 and 3 of pyruvate and glyceraldehyde 3-phosphate to yield 1-deoxy-D-xylulose-5-phosphate (DXP). This is 1-deoxy-D-xylulose-5-phosphate synthase from Cyanothece sp. (strain PCC 7425 / ATCC 29141).